The chain runs to 264 residues: Thymidylate synthase (264 aa).

Arg21 lines the dUMP pocket. Position 51 (His51) interacts with (6R)-5,10-methylene-5,6,7,8-tetrahydrofolate. 126 to 127 contributes to the dUMP binding site; that stretch reads RR. The active-site Nucleophile is the Cys146. DUMP contacts are provided by residues 166–169, Asn177, and 207–209; these read RSCD and HLY. Residue Asp169 coordinates (6R)-5,10-methylene-5,6,7,8-tetrahydrofolate. Ala263 contacts (6R)-5,10-methylene-5,6,7,8-tetrahydrofolate.

This sequence belongs to the thymidylate synthase family. Bacterial-type ThyA subfamily. As to quaternary structure, homodimer.

The protein resides in the cytoplasm. The catalysed reaction is dUMP + (6R)-5,10-methylene-5,6,7,8-tetrahydrofolate = 7,8-dihydrofolate + dTMP. The protein operates within pyrimidine metabolism; dTTP biosynthesis. In terms of biological role, catalyzes the reductive methylation of 2'-deoxyuridine-5'-monophosphate (dUMP) to 2'-deoxythymidine-5'-monophosphate (dTMP) while utilizing 5,10-methylenetetrahydrofolate (mTHF) as the methyl donor and reductant in the reaction, yielding dihydrofolate (DHF) as a by-product. This enzymatic reaction provides an intracellular de novo source of dTMP, an essential precursor for DNA biosynthesis. The chain is Thymidylate synthase from Enterobacter sp. (strain 638).